We begin with the raw amino-acid sequence, 112 residues long: Nitrogen regulatory protein P-II (112 aa).

Tyr51 bears the O-UMP-tyrosine mark.

This sequence belongs to the P(II) protein family. Homotrimer.

In nitrogen-limiting conditions, when the ratio of Gln to 2-ketoglutarate decreases, P-II is uridylylated to P-II-UMP. P-II-UMP allows the deadenylation of glutamine synthetase (GS), thus activating the enzyme. Conversely, in nitrogen excess P-II is deuridylated and promotes the adenylation of GS. P-II indirectly controls the transcription of the GS gene (glnA). P-II prevents NR-II-catalyzed conversion of NR-I to NR-I-phosphate, the transcriptional activator of glnA. When P-II is uridylylated to P-II-UMP, these events are reversed. The sequence is that of Nitrogen regulatory protein P-II (glnB) from Mesorhizobium japonicum (strain LMG 29417 / CECT 9101 / MAFF 303099) (Mesorhizobium loti (strain MAFF 303099)).